The sequence spans 166 residues: Mitochondrial inner membrane protease subunit 1 (166 aa).

Catalysis depends on residues serine 40 and lysine 83.

Belongs to the peptidase S26 family. IMP1 subfamily. As to quaternary structure, heterodimer of 2 subunits, IMMPL1 and IMMPL2.

It is found in the mitochondrion inner membrane. Its function is as follows. Catalyzes the removal of transit peptides required for the targeting of proteins from the mitochondrial matrix, across the inner membrane, into the inter-membrane space. Known to process the nuclear encoded protein DIABLO. This chain is Mitochondrial inner membrane protease subunit 1 (IMMP1L), found in Homo sapiens (Human).